A 249-amino-acid polypeptide reads, in one-letter code: Probable transcriptional regulatory protein Dtur_1615 (249 aa).

Belongs to the TACO1 family.

The protein localises to the cytoplasm. The polypeptide is Probable transcriptional regulatory protein Dtur_1615 (Dictyoglomus turgidum (strain DSM 6724 / Z-1310)).